A 1404-amino-acid chain; its full sequence is DNA-directed RNA polymerase subunit beta' (1404 aa).

Residues Cys-70, Cys-72, Cys-85, and Cys-88 each coordinate Zn(2+). Mg(2+) is bound by residues Asp-460, Asp-462, and Asp-464. Positions 814, 888, 895, and 898 each coordinate Zn(2+).

It belongs to the RNA polymerase beta' chain family. As to quaternary structure, the RNAP catalytic core consists of 2 alpha, 1 beta, 1 beta' and 1 omega subunit. When a sigma factor is associated with the core the holoenzyme is formed, which can initiate transcription. Mg(2+) is required as a cofactor. Requires Zn(2+) as cofactor.

It catalyses the reaction RNA(n) + a ribonucleoside 5'-triphosphate = RNA(n+1) + diphosphate. In terms of biological role, DNA-dependent RNA polymerase catalyzes the transcription of DNA into RNA using the four ribonucleoside triphosphates as substrates. This is DNA-directed RNA polymerase subunit beta' from Shewanella piezotolerans (strain WP3 / JCM 13877).